The following is a 558-amino-acid chain: Putative F-box/LRR-repeat protein R542 (558 aa).

The F-box domain occupies 1–47; the sequence is MLLNLPYEILLIIFSLIESKKFFKLLSINKEVREFILTMLNQNPKSF. 10 LRR repeats span residues 73–105, 139–176, 177–220, 251–284, 285–317, 329–361, 369–395, 420–444, 445–477, and 481–508; these read KSTINDDQLKYLSDVYSLNISNCKSITDRGLSF, CGKITDKGIENLVYGKTLNSDEPIPTVINTIRKINLQC, CMRI…KIDG, LDKLTKLILPNVPEHIEYIDFNKMPNLVKADLSG, CINLLDEQLKGLSKVRKLNLKECYDITDVGLSY, CFRITDSGLKYLSNADYVNICGCLKITNEGFFY, VVGYTTLSLYDCMIDGCGDYEYLTISD, CNNIIDVDLKSFTNLPTLSKIDLRY, CNNITNQGLSALCNIPIVKISNNYQISSKGISY, and SKKISIESCPKINSFPNLTGLKKLVFKT.

The polypeptide is Putative F-box/LRR-repeat protein R542 (Acanthamoeba polyphaga mimivirus (APMV)).